Consider the following 159-residue polypeptide: Large ribosomal subunit protein uL15 (159 aa).

The interval 14–44 is disordered; sequence ASRKRVGRGRATGWGCTSGRGNKGQNSRAGA. Gly residues predominate over residues 23–35; sequence RATGWGCTSGRGN.

It belongs to the universal ribosomal protein uL15 family. In terms of assembly, part of the 50S ribosomal subunit.

Binds to the 23S rRNA. The sequence is that of Large ribosomal subunit protein uL15 from Solidesulfovibrio magneticus (strain ATCC 700980 / DSM 13731 / RS-1) (Desulfovibrio magneticus).